The primary structure comprises 550 residues: Thioredoxin domain-containing protein 2 (550 aa).

The disordered stretch occupies residues 1–50; the sequence is MFKKNQKLSKDKGLEVNSVQAGAPEESDVKLNNGGKANERGSNEFLDTAQ. 2 positions are modified to phosphoserine: S42 and S51. The interval 63–428 is disordered; it reads MLHMSTEESE…IKSSEDVQPS (366 aa). Composition is skewed to polar residues over residues 73–87, 96–105, and 112–140; these read PPQQ…SENT, PKSSTKNTQL, and KTSS…QGST. 22 consecutive repeat copies span residues 104–118, 119–133, 134–148, 149–163, 164–178, 179–193, 194–208, 209–223, 224–238, 239–252, 253–267, 268–282, 283–297, 298–312, 313–327, 328–342, 343–357, 358–384, 385–399, 400–412, 413–425, and 426–440. The segment at 104-440 is 22 X 15 AA approximate tandem repeat of Q-P-K-X-G-D-I-P-K-S-[PS]-E-[KE]-X-I; it reads QLKQEDISKT…EIFPFEAEIE (337 aa). Basic and acidic residues-rich tracts occupy residues 148–205, 217–259, 277–304, and 313–348; these read THDR…KSLE, KSSE…ESET, QVKD…ENKI, and QPKE…KEEI. The residue at position 158 (S158) is a Phosphoserine. Residues S351 and S379 each carry the phosphoserine modification. Residues 401–550 enclose the Thioredoxin domain; that stretch reads KEEITVSPED…KLEKSIAELK (150 aa). The residue at position 407 (S407) is a Phosphoserine. A disulfide bridge links C477 with C480.

Testis-specific. Strongly expressed in the testicular seminiferous tubules, mostly in the round spermatids.

Its subcellular location is the cytoplasm. Its function is as follows. Probably plays a regulatory role in sperm development. May participate in regulation of fibrous sheath (FS) assembly by supporting the formation of disulfide bonds during sperm tail morphogenesis. May also be required to rectify incorrect disulfide pairing and generate suitable pairs between the FS constituents. Can reduce disulfide bonds in vitro in the presence of NADP and thioredoxin reductase. This Rattus norvegicus (Rat) protein is Thioredoxin domain-containing protein 2 (Txndc2).